The primary structure comprises 545 residues: Carboxypeptidase N subunit 2 (545 aa).

The first 21 residues, 1–21 (MLPGAWLLWTSLLLLARPAQP), serve as a signal peptide directing secretion. Residues 22–49 (CPMGCDCFVQEVFCSDEELATVPLDIPP) form the LRRNT domain. N-linked (GlcNAc...) asparagine glycans are attached at residues asparagine 74, asparagine 111, and asparagine 119. 12 LRR repeats span residues 98 to 119 (RLEDLEVTGSSFLNLSTNIFSN), 122 to 143 (SLGKLTLNFNMLEALPEGLFQH), 146 to 167 (ALESLHLQGNQLQALPRRLFQP), 170 to 191 (HLKTLNLAQNLLAQLPEELFHP), 194 to 215 (SLQTLKLSNNALSGLPQGVFGK), 218 to 239 (SLQELFLDSNNISELPPQVFSQ), 242 to 263 (CLERLWLQRNAITHLPLSIFAS), 266 to 287 (NLTFLSLQWNMLRVLPAGLFAH), 290 to 311 (CLVGLSLTHNQLETVAEGTFAH), 314 to 335 (NLRSLMLSYNAITHLPAGIFRD), 338 to 359 (ELVKLYLGSNNLTALHPALFQN), and 362 to 383 (KLELLSLSKNQLTTLPEGIFDT). N-linked (GlcNAc...) asparagine glycosylation occurs at asparagine 228. Asparagine 266 is a glycosylation site (N-linked (GlcNAc...) asparagine). Asparagine 348 and asparagine 359 each carry an N-linked (GlcNAc...) asparagine glycan. Positions 395-447 (NPWQCDCHLAYLFNWLQQYTDRLLNIQTYCAGPAYLKGQVVPALNEKQLVCPV) constitute an LRRCT domain. A glycan (N-linked (GlcNAc...) asparagine) is linked at asparagine 518.

Tetramer of two catalytic chains and two glycosylated inactive chains. In terms of processing, whether or not any Cys residues participate in intrachain bonds is unknown, but they do not form interchain disulfide bonds with the 50 kDa catalytic subunit.

It is found in the secreted. The 83 kDa subunit binds and stabilizes the catalytic subunit at 37 degrees Celsius and keeps it in circulation. Under some circumstances it may be an allosteric modifier of the catalytic subunit. In Homo sapiens (Human), this protein is Carboxypeptidase N subunit 2 (CPN2).